Consider the following 536-residue polypeptide: MTLLALKEDRPTPKAVYNWRVYTCAAIASFASCMIGYDSAFIGTTLALPSFKKEFDFASYTPGALALLQSNIVSVYQAGAFFGSLFAFATSYFLGRRKSLIAFSVVFIIGAAIMLAADGQGRGIAPIIAGRVLAGIGVGGASNMVPIYISELAPPAVRGRLVGIYELGWQIGGLVGFWINYGVNTTMAPTRSQWLIPFAVQLIPAGLLFLGSFWIPESPRWLFANGKREEAMKVLCWMRNLEPTDRYIVEEVSYIDADLERYAREVGKGFWKPFLSLKQRKVQWRFFLGGMLFLWQNGSGINAINYYSPTVFRSIGITGTNTGFLTTGIFGVVKMVLTIVWLLWLVDLVGRRRMLFIGATGGSLCMWFIGAYIKIAGPGSTKAEDAKLTSGGIAAIFFFYLWTAFYTPSWNGTPWVINSEMFDQNTRSLGQASAAANNWFWNFIISRFTPQMFIKMEYGVYFFFASLMLLSIVFIYFFIPETKSIPLEAMDRLFEIKPVHNANKILMAELNFDRNPEREESSLDEKDRVTQTENAV.

The Cytoplasmic segment spans residues methionine 1–alanine 26. The helical transmembrane segment at isoleucine 27–alanine 47 threads the bilayer. The Extracellular segment spans residues leucine 48–serine 74. A helical membrane pass occupies residues valine 75–glycine 95. The Cytoplasmic portion of the chain corresponds to arginine 96–lysine 98. Residues serine 99–glycine 119 traverse the membrane as a helical segment. Topologically, residues glutamine 120–arginine 131 are extracellular. The chain crosses the membrane as a helical span at residues valine 132–leucine 152. Residues alanine 153–arginine 160 lie on the Cytoplasmic side of the membrane. The chain crosses the membrane as a helical span at residues leucine 161–tyrosine 181. The Extracellular portion of the chain corresponds to glycine 182 to leucine 195. The N-linked (GlcNAc...) asparagine glycan is linked to asparagine 184. The helical transmembrane segment at isoleucine 196–proline 216 threads the bilayer. At glutamate 217–arginine 285 the chain is on the cytoplasmic side. The helical transmembrane segment at phenylalanine 286–tyrosine 306 threads the bilayer. At tyrosine 307–threonine 327 the chain is on the extracellular side. The helical transmembrane segment at glycine 328 to valine 349 threads the bilayer. Residues glycine 350 to arginine 352 lie on the Cytoplasmic side of the membrane. Residues arginine 353–isoleucine 373 traverse the membrane as a helical segment. The Extracellular segment spans residues lysine 374 to threonine 389. Residues serine 390–tryptophan 410 traverse the membrane as a helical segment. At asparagine 411–alanine 435 the chain is on the cytoplasmic side. The helical transmembrane segment at alanine 436 to methionine 456 threads the bilayer. The Extracellular portion of the chain corresponds to glutamate 457–tyrosine 458. A helical transmembrane segment spans residues glycine 459 to isoleucine 479. Topologically, residues proline 480 to valine 536 are cytoplasmic. Positions proline 516 to threonine 530 are enriched in basic and acidic residues. The interval proline 516–valine 536 is disordered.

This sequence belongs to the major facilitator superfamily. Sugar transporter (TC 2.A.1.1) family.

It localises to the membrane. The chain is Quinate permease (qa-y) from Neurospora terricola.